The primary structure comprises 287 residues: Cysteine-rich repeat secretory protein 59 (287 aa).

An N-terminal signal peptide occupies residues 1 to 26 (METTKKLSPIFCFSSLLCLFFTMNQA). 2 Gnk2-homologous domains span residues 32–134 (HMDT…DKFF) and 140–250 (KKPN…ITTS). Asn43, Asn47, Asn63, Asn72, Asn93, Asn103, Asn111, and Asn212 each carry an N-linked (GlcNAc...) asparagine glycan.

It belongs to the cysteine-rich repeat secretory protein family.

It localises to the secreted. The polypeptide is Cysteine-rich repeat secretory protein 59 (CRRSP59) (Arabidopsis thaliana (Mouse-ear cress)).